We begin with the raw amino-acid sequence, 409 residues long: N-acetylglucosamine-6-phosphate deacetylase (409 aa).

Glu143 serves as a coordination point for a divalent metal cation. Residue 154–155 participates in substrate binding; it reads AH. Residues His211 and His232 each coordinate a divalent metal cation. Substrate is bound by residues 235-236, Arg243, and 269-272; these read NA and DGIH. Catalysis depends on Asp294, which acts as the Proton donor/acceptor. 328-330 contributes to the substrate binding site; sequence LGG.

It belongs to the metallo-dependent hydrolases superfamily. NagA family. It depends on a divalent metal cation as a cofactor.

It carries out the reaction N-acetyl-D-glucosamine 6-phosphate + H2O = D-glucosamine 6-phosphate + acetate. Its pathway is amino-sugar metabolism; N-acetylneuraminate degradation. Functionally, hydrolyzes the N-glycolyl group from N-glycolylglucosamine 6-phosphate (GlcNGc-6-P) in the N-glycolylneuraminic acid (Neu5Gc) degradation pathway. The chain is N-acetylglucosamine-6-phosphate deacetylase (Amdhd2) from Mus musculus (Mouse).